A 271-amino-acid chain; its full sequence is Ribosomal RNA small subunit methyltransferase A (271 aa).

6 residues coordinate S-adenosyl-L-methionine: His11, Leu13, Gly38, Glu58, Asp86, and Asn101.

Belongs to the class I-like SAM-binding methyltransferase superfamily. rRNA adenine N(6)-methyltransferase family. RsmA subfamily.

Its subcellular location is the cytoplasm. The catalysed reaction is adenosine(1518)/adenosine(1519) in 16S rRNA + 4 S-adenosyl-L-methionine = N(6)-dimethyladenosine(1518)/N(6)-dimethyladenosine(1519) in 16S rRNA + 4 S-adenosyl-L-homocysteine + 4 H(+). In terms of biological role, specifically dimethylates two adjacent adenosines (A1518 and A1519) in the loop of a conserved hairpin near the 3'-end of 16S rRNA in the 30S particle. May play a critical role in biogenesis of 30S subunits. This is Ribosomal RNA small subunit methyltransferase A from Helicobacter acinonychis (strain Sheeba).